A 528-amino-acid chain; its full sequence is Ankyrin repeat and death domain-containing protein 1B (528 aa).

ANK repeat units follow at residues 67 to 96, 100 to 129, 133 to 162, 166 to 197, 201 to 230, 234 to 263, 267 to 296, 300 to 329, 333 to 362, and 366 to 395; these read PNERSFQNAAKSNNLDLMEKLFEKKVNINV, MNRTALHFAVGRNHLSAVDFLLKHKARVDV, HGLTVIHLAAWSGSLEVMLMLVKAGADQRA, DGMSALHFATQSNHVRIVEYLIQDLHLKDLNQ, KGRKPFLLAAERGHVEMIEKLTFLNLHTSE, GGNTALHLAAKHGHSPAVQVLLAQWQDINE, LNISSLQIATRNGHASLVNFLLSENVDLHQ, PKESPLHLVVINNHITVVNSLLSAQHDIDI, KQQTPLHVAADRGNVELVETLLKAGCDLKA, and QGKTALAVASRSNHSLVVGMLIKAERYYAW. The region spanning 427-515 is the Death domain; the sequence is TLLWDLAYHQ…KLAEKTRHFK (89 aa).

In Homo sapiens (Human), this protein is Ankyrin repeat and death domain-containing protein 1B (ANKDD1B).